Here is a 249-residue protein sequence, read N- to C-terminus: ATP synthase subunit a, chloroplastic (249 aa).

Helical transmembrane passes span 38–58, 97–117, 136–156, 201–221, and 222–242; these read GQVL…SVIA, VPFV…GALI, INTT…AGLS, LVVA…MMLL, and GLFT…AYIG.

The protein belongs to the ATPase A chain family. As to quaternary structure, F-type ATPases have 2 components, CF(1) - the catalytic core - and CF(0) - the membrane proton channel. CF(1) has five subunits: alpha(3), beta(3), gamma(1), delta(1), epsilon(1). CF(0) has four main subunits: a, b, b' and c.

It is found in the plastid. Its subcellular location is the chloroplast thylakoid membrane. In terms of biological role, key component of the proton channel; it plays a direct role in the translocation of protons across the membrane. The protein is ATP synthase subunit a, chloroplastic of Chlorokybus atmophyticus (Soil alga).